Reading from the N-terminus, the 101-residue chain is Putative pterin-4-alpha-carbinolamine dehydratase (101 aa).

It belongs to the pterin-4-alpha-carbinolamine dehydratase family.

It catalyses the reaction (4aS,6R)-4a-hydroxy-L-erythro-5,6,7,8-tetrahydrobiopterin = (6R)-L-erythro-6,7-dihydrobiopterin + H2O. The chain is Putative pterin-4-alpha-carbinolamine dehydratase from Rhodopseudomonas palustris (strain BisA53).